We begin with the raw amino-acid sequence, 135 residues long: Large ribosomal subunit protein bL19 (135 aa).

This sequence belongs to the bacterial ribosomal protein bL19 family.

Its function is as follows. This protein is located at the 30S-50S ribosomal subunit interface and may play a role in the structure and function of the aminoacyl-tRNA binding site. The chain is Large ribosomal subunit protein bL19 from Xanthomonas campestris pv. campestris (strain 8004).